The primary structure comprises 843 residues: Protein translocase subunit SecA 1 (843 aa).

ATP-binding positions include Q91, 109–113, and D498; that span reads GEGKT. Basic and acidic residues predominate over residues 799–813; that stretch reads EAKHVSAEDGKEKVK. The disordered stretch occupies residues 799–826; that stretch reads EAKHVSAEDGKEKVKPKPIVKGDQVGRN. Zn(2+) contacts are provided by C829, C831, C840, and H841.

This sequence belongs to the SecA family. In terms of assembly, monomer and homodimer. Part of the essential Sec protein translocation apparatus which comprises SecA, SecYEG and auxiliary proteins SecDF. Other proteins may also be involved. Zn(2+) is required as a cofactor.

The protein resides in the cell membrane. Its subcellular location is the cytoplasm. The catalysed reaction is ATP + H2O + cellular proteinSide 1 = ADP + phosphate + cellular proteinSide 2.. Functionally, part of the Sec protein translocase complex. Interacts with the SecYEG preprotein conducting channel. Has a central role in coupling the hydrolysis of ATP to the transfer of proteins into and across the cell membrane, serving as an ATP-driven molecular motor driving the stepwise translocation of polypeptide chains across the membrane. The protein is Protein translocase subunit SecA 1 of Staphylococcus aureus (strain N315).